Consider the following 408-residue polypeptide: MKGVFTVAEKVVLAYSGGLDTSIIIPWLKETYGYEVIAVAVDVGQGEELEPLEEKAIKSGASKIYILDKKKEFVEEYIWPTLKAGAVYEGKYLLGTSFARPLIAKCLVEVAAQEGATAVAHGATGKGNDQVRFELGVKALNPQLKVIAPWRIWNIRSREEAMDYAAARGIPVPVTKDRPYSMDRNLWHLSHEGGDLEDPWNAPGDDLYLIITPPEQAPDKPTYVTIDFEKGIPVAVDGEKLDAVALVEKLNDLAAANGVGIVDIVENRLVGMKSRGVYETPGGTILYTAHRELEYLTLDRMTMHFKEMVAAKYAELVYDGNWFSPLKKALDAFVDSTQETVTGTVRLKLYKGSCTPAGVKSPYSIYNEDLVTFGAGGDYDHKDATGFINLFGLPLKVRALMEQKTGLR.

An ATP-binding site is contributed by 14–22 (AYSGGLDTS). The L-citrulline site is built by tyrosine 92 and serine 97. Glycine 122 contacts ATP. Residues threonine 124, asparagine 128, and aspartate 129 each coordinate L-aspartate. Asparagine 128 provides a ligand contact to L-citrulline. 5 residues coordinate L-citrulline: arginine 132, serine 181, serine 190, glutamate 266, and tyrosine 278.

It belongs to the argininosuccinate synthase family. Type 1 subfamily. As to quaternary structure, homotetramer.

It localises to the cytoplasm. It carries out the reaction L-citrulline + L-aspartate + ATP = 2-(N(omega)-L-arginino)succinate + AMP + diphosphate + H(+). Its pathway is amino-acid biosynthesis; L-arginine biosynthesis; L-arginine from L-ornithine and carbamoyl phosphate: step 2/3. In Moorella thermoacetica (strain ATCC 39073 / JCM 9320), this protein is Argininosuccinate synthase.